Consider the following 362-residue polypeptide: MENQVLTPHVYWAQRHRELYLRVELSDVQNPAISITENVLHFKAQGHGAKGDNVYEFHLEFLDLVKPEPVYKLTQRQVNITVQKKVSQWWERLTKQEKRPLFLAPDFDRWLDESDAEMELRAKEEERLNKLRLESEGSPETLTNLRKGYLFMYNLVQFLGFSWIFVNLTVRFCILGKESFYDTFHTVADMMYFCQMLAVVETINAAIGVTTSPVLPSLIQLLGRNFILFIIFGTMEEMQNKAVVFFVFYLWSAIEIFRYSFYMLTCIDMDWKVLTWLRYTLWIPLYPLGCLAEAVSVIQSIPIFNETGRFSFTLPYPVKIKVRFSFFLQIYLIMIFLGLYINFRHLYKQRRRRYGQKKKKIH.

The residue at position 1 (Met-1) is an N-acetylmethionine. The Cytoplasmic portion of the chain corresponds to 1–149 (MENQVLTPHV…ETLTNLRKGY (149 aa)). A CS domain is found at 5 to 94 (VLTPHVYWAQ…KVSQWWERLT (90 aa)). Thr-7 carries the post-translational modification Phosphothreonine. The stretch at 111–136 (LDESDAEMELRAKEEERLNKLRLESE) forms a coiled coil. Residues Ser-114 and Ser-135 each carry the phosphoserine modification. A helical membrane pass occupies residues 150–170 (LFMYNLVQFLGFSWIFVNLTV). Residues 171 to 185 (RFCILGKESFYDTFH) are Lumenal-facing. Residues 186–207 (TVADMMYFCQMLAVVETINAAI) traverse the membrane as a helical segment. Residues 208-217 (GVTTSPVLPS) lie on the Cytoplasmic side of the membrane. The chain crosses the membrane as a helical span at residues 218-235 (LIQLLGRNFILFIIFGTM). Residues 236 to 241 (EEMQNK) lie on the Lumenal side of the membrane. Residues 242–256 (AVVFFVFYLWSAIEI) form a helical membrane-spanning segment. Over 257–279 (FRYSFYMLTCIDMDWKVLTWLRY) the chain is Cytoplasmic. A helical membrane pass occupies residues 280–298 (TLWIPLYPLGCLAEAVSVI). Active-site residues include Tyr-286 and Glu-293. Residues 299-322 (QSIPIFNETGRFSFTLPYPVKIKV) are Lumenal-facing. Residues 323-343 (RFSFFLQIYLIMIFLGLYINF) traverse the membrane as a helical segment. The Cytoplasmic segment spans residues 344–362 (RHLYKQRRRRYGQKKKKIH).

The protein belongs to the very long-chain fatty acids dehydratase HACD family. As to quaternary structure, may interact with enzymes of the ELO family (including ELOVL1); with those enzymes that mediate condensation, the first of the four steps of the reaction cycle responsible for fatty acids elongation, may be part of a larger fatty acids elongase complex. Interacts with RAC1. Associates with internalized insulin receptor/INSR complexes on Golgi/endosomal membranes; HACD3/PTPLAD1 together with ATIC and PRKAA2/AMPK2 is proposed to be part of a signaling network regulating INSR autophosphorylation and endocytosis. In terms of tissue distribution, highly expressed in testis, kidney, brain, liver and weakly in skeletal muscle, spleen and heart. No expression detected in leukocytes.

The protein localises to the endoplasmic reticulum membrane. It catalyses the reaction a very-long-chain (3R)-3-hydroxyacyl-CoA = a very-long-chain (2E)-enoyl-CoA + H2O. The catalysed reaction is (3R)-hydroxyhexadecanoyl-CoA = (2E)-hexadecenoyl-CoA + H2O. Its pathway is lipid metabolism; fatty acid biosynthesis. Its function is as follows. Catalyzes the third of the four reactions of the long-chain fatty acids elongation cycle. This endoplasmic reticulum-bound enzymatic process, allows the addition of two carbons to the chain of long- and very long-chain fatty acids/VLCFAs per cycle. This enzyme catalyzes the dehydration of the 3-hydroxyacyl-CoA intermediate into trans-2,3-enoyl-CoA, within each cycle of fatty acid elongation. Thereby, it participates in the production of VLCFAs of different chain lengths that are involved in multiple biological processes as precursors of membrane lipids and lipid mediators. May be involved in Rac1-signaling pathways leading to the modulation of gene expression. Promotes insulin receptor/INSR autophosphorylation and is involved in INSR internalization. This is Very-long-chain (3R)-3-hydroxyacyl-CoA dehydratase 3 from Homo sapiens (Human).